A 257-amino-acid chain; its full sequence is Probable enoyl-CoA hydratase (257 aa).

The protein belongs to the enoyl-CoA hydratase/isomerase family.

It catalyses the reaction a (3S)-3-hydroxyacyl-CoA = a (2E)-enoyl-CoA + H2O. It carries out the reaction a 4-saturated-(3S)-3-hydroxyacyl-CoA = a (3E)-enoyl-CoA + H2O. In terms of biological role, could possibly oxidize fatty acids using specific components. This Rhodobacter capsulatus (strain ATCC BAA-309 / NBRC 16581 / SB1003) protein is Probable enoyl-CoA hydratase (fadB1).